An 82-amino-acid polypeptide reads, in one-letter code: Immediate early response 3-interacting protein 1 (82 aa).

The next 2 helical transmembrane spans lie at Ala-2–Leu-22 and Val-62–Gly-82.

The protein belongs to the YOS1 family.

The protein resides in the endoplasmic reticulum membrane. In terms of biological role, regulator of endoplasmic reticulum secretion that acts as a key determinant of brain size. Required for secretion of extracellular matrix proteins. Required for correct brain development by depositing sufficient extracellular matrix proteins for tissue integrity and the proliferation of neural progenitors. Acts as a regulator of the unfolded protein response (UPR). This Mus musculus (Mouse) protein is Immediate early response 3-interacting protein 1.